The primary structure comprises 156 residues: MNPGSAPWERRTRERMRAMSRKNGEWGDVRVGGVPGLSARVRPLPGAAGADTQPDWIDVTVMPREEPAAASRRRTSPRPPVRSRAEVHQAGLAESAQFHQSLMRWLEAHHLLGAVRSVSEPGSMPMLHLRCAPRVLDQLRRAPEFEAGTMMPLDLI.

The disordered stretch occupies residues 1–89 (MNPGSAPWER…PVRSRAEVHQ (89 aa)). Residues 8-28 (WERRTRERMRAMSRKNGEWGD) show a composition bias toward basic and acidic residues.

As to quaternary structure, interacts with PopC in non-starving cells.

It is found in the cytoplasm. Its activity is regulated as follows. In response to starvation, RelA is activated resulting in the accumulation of (p)ppGpp, which causes the degradation of PopD in an FtsH(D)-dependent manner, thereby releasing pre-formed PopC for secretion. Its function is as follows. Inhibitor of protease PopC. In non-starving cells, forms a cytoplasmic complex with PopC and inhibits PopC secretion and activity. This chain is PopC secretion inhibitor, found in Myxococcus xanthus (strain DK1622).